The following is a 188-amino-acid chain: dCTP deaminase (188 aa).

DCTP contacts are provided by residues 111-116, 135-137, glutamine 156, tyrosine 170, lysine 179, and glutamine 180; these read KSTYAR and TLE. Glutamate 137 acts as the Proton donor/acceptor in catalysis.

The protein belongs to the dCTP deaminase family. In terms of assembly, homotrimer.

The enzyme catalyses dCTP + H2O + H(+) = dUTP + NH4(+). The protein operates within pyrimidine metabolism; dUMP biosynthesis; dUMP from dCTP (dUTP route): step 1/2. Functionally, catalyzes the deamination of dCTP to dUTP. The chain is dCTP deaminase from Rickettsia africae (strain ESF-5).